The sequence spans 333 residues: Complement C1q and tumor necrosis factor-related protein 9A (333 aa).

Positions 1-19 (MRIWWLLLAIEICTGNINS) are cleaved as a signal peptide. 3 consecutive Collagen-like domains span residues 24–82 (RQGH…DGKV), 95–154 (GSPG…PGPM), and 155–191 (GPIG…GEKG). The disordered stretch occupies residues 24–188 (RQGHPGIPGN…GIRGWKGDRG (165 aa)). Residues 26 to 40 (GHPGIPGNPGHNGLP) show a composition bias toward low complexity. 4-hydroxyproline is present on residues proline 31, proline 34, and proline 40. Over residues 42-57 (RDGRDGAKGDKGDAGE) the composition is skewed to basic and acidic residues. Residues proline 58, proline 61, and proline 64 each carry the 4-hydroxyproline modification. Residues 69–88 (TSGEKGERGADGKVEAKGIK) are compositionally biased toward basic and acidic residues. A 5-hydroxylysine mark is found at lysine 73 and lysine 127. Residues lysine 73 and lysine 127 are each glycosylated (O-linked (Gal...) hydroxylysine). A 4-hydroxyproline mark is found at proline 151, proline 160, and proline 175. In terms of domain architecture, C1q spans 197–333 (LVLPKSAFTV…FTGFLLFSSP (137 aa)).

Multimers (predominantly trimers). Interacts with ADIPOQ via the C1q domain to form a heterotrimeric complex. Interacts with CTRP9B. Forms heterotrimers and heterooligomeric complexes with CTRP9B. Expressed predominantly in adipose tissue.

The protein localises to the secreted. In terms of biological role, probable adipokine. Activates AMPK, AKT, and p44/42 MAPK signaling pathways. The protein is Complement C1q and tumor necrosis factor-related protein 9A (C1QTNF9) of Homo sapiens (Human).